The primary structure comprises 117 residues: Cell division protein FtsL (117 aa).

Residues 1-35 (MSNLAYQPEKQQRHAISPEKKVIVKKRASITLGEK) lie on the Cytoplasmic side of the membrane. The helical transmembrane segment at 36–56 (VLLVLFAAAVLSVSLLIVSKA) threads the bilayer. The Extracellular segment spans residues 57-117 (YAAYQTNIEV…KDKKVKNIQE (61 aa)).

The protein belongs to the FtsL family. Monomer. Interacts with DivIB and DivIC. Interaction with DivIC stabilizes FtsL against RasP cleavage. Cleaved by RasP. Cleavage is important for turnover and function of FtsL.

It is found in the cell membrane. Functionally, essential cell division protein that may play a structural role. Probably involved in the regulation of the timing of cell division. Also required for sporulation. This chain is Cell division protein FtsL, found in Bacillus subtilis (strain 168).